We begin with the raw amino-acid sequence, 216 residues long: GTPase IMAP family member GIMD1 (216 aa).

Positions 5 to 216 constitute an AIG1-type G domain; it reads KMIINLAVLG…ENHFQVLSFT (212 aa). Residues 14 to 22, Ser35, and 147 to 149 contribute to the GTP site; these read GKTQSGKSS and HAE.

Belongs to the TRAFAC class TrmE-Era-EngA-EngB-Septin-like GTPase superfamily. AIG1/Toc34/Toc159-like paraseptin GTPase family. IAN subfamily.

This Rattus norvegicus (Rat) protein is GTPase IMAP family member GIMD1 (Gimd1).